We begin with the raw amino-acid sequence, 274 residues long: Octanoyltransferase LipM (274 aa).

Residues 31–245 (GEVPPTLRLY…GFAEALGARL (215 aa)) form the BPL/LPL catalytic domain. The active-site Acyl-thioester intermediate is Cys-147.

This sequence belongs to the octanoyltransferase LipM family. Monomer.

It carries out the reaction octanoyl-[ACP] + L-lysyl-[protein] = N(6)-octanoyl-L-lysyl-[protein] + holo-[ACP] + H(+). Its pathway is protein modification; protein lipoylation via endogenous pathway; protein N(6)-(lipoyl)lysine from octanoyl-[acyl-carrier-protein]. Catalyzes the transfer of endogenously produced octanoic acid from octanoyl-acyl-carrier-protein onto the lipoyl domain of GcvH, an intermediate carrier during protein lipoylation. This Kyrpidia tusciae (strain DSM 2912 / NBRC 15312 / T2) (Bacillus tusciae) protein is Octanoyltransferase LipM.